Consider the following 571-residue polypeptide: Urease subunit alpha (571 aa).

The 440-residue stretch at 132 to 571 (GAIDTHIHFI…LPMGQKYFLF (440 aa)) folds into the Urease domain. Residues histidine 137, histidine 139, and lysine 220 each contribute to the Ni(2+) site. An N6-carboxylysine modification is found at lysine 220. Histidine 222 provides a ligand contact to substrate. Positions 249 and 275 each coordinate Ni(2+). Histidine 323 serves as the catalytic Proton donor. Ni(2+) is bound at residue aspartate 363.

Belongs to the metallo-dependent hydrolases superfamily. Urease alpha subunit family. Heterotrimer of UreA (gamma), UreB (beta) and UreC (alpha) subunits. Three heterotrimers associate to form the active enzyme. It depends on Ni cation as a cofactor. Carboxylation allows a single lysine to coordinate two nickel ions.

Its subcellular location is the cytoplasm. It carries out the reaction urea + 2 H2O + H(+) = hydrogencarbonate + 2 NH4(+). It participates in nitrogen metabolism; urea degradation; CO(2) and NH(3) from urea (urease route): step 1/1. In Corynebacterium urealyticum (strain ATCC 43042 / DSM 7109), this protein is Urease subunit alpha.